A 205-amino-acid polypeptide reads, in one-letter code: MFEYVTGYVEYVGPEYIVLDHNGIGYQIFTPNPYVFQRSKQEIRVYTYHYVREDIMALYGFKTREERLLFTKLLGVSGIGPKGALAILASGQTGQVVQAIENEDERFLVKFPGVGKKTARQMILDLKGKLADVVPDVFVDLFSDEERFDEKKGSSTELDEALEALRALGYAEREINRVLPELLKESLTTDQYIKKALSLLLNGKR.

A domain I region spans residues methionine 1–lysine 62. The domain II stretch occupies residues threonine 63–leucine 141. The interval phenylalanine 142–lysine 152 is flexible linker. The tract at residues glycine 153 to arginine 205 is domain III.

This sequence belongs to the RuvA family. In terms of assembly, homotetramer. Forms an RuvA(8)-RuvB(12)-Holliday junction (HJ) complex. HJ DNA is sandwiched between 2 RuvA tetramers; dsDNA enters through RuvA and exits via RuvB. An RuvB hexamer assembles on each DNA strand where it exits the tetramer. Each RuvB hexamer is contacted by two RuvA subunits (via domain III) on 2 adjacent RuvB subunits; this complex drives branch migration. In the full resolvosome a probable DNA-RuvA(4)-RuvB(12)-RuvC(2) complex forms which resolves the HJ.

Its subcellular location is the cytoplasm. In terms of biological role, the RuvA-RuvB-RuvC complex processes Holliday junction (HJ) DNA during genetic recombination and DNA repair, while the RuvA-RuvB complex plays an important role in the rescue of blocked DNA replication forks via replication fork reversal (RFR). RuvA specifically binds to HJ cruciform DNA, conferring on it an open structure. The RuvB hexamer acts as an ATP-dependent pump, pulling dsDNA into and through the RuvAB complex. HJ branch migration allows RuvC to scan DNA until it finds its consensus sequence, where it cleaves and resolves the cruciform DNA. The protein is Holliday junction branch migration complex subunit RuvA of Bacillus cytotoxicus (strain DSM 22905 / CIP 110041 / 391-98 / NVH 391-98).